The primary structure comprises 147 residues: Large ribosomal subunit protein uL13 (147 aa).

This sequence belongs to the universal ribosomal protein uL13 family. As to quaternary structure, part of the 50S ribosomal subunit.

Its function is as follows. This protein is one of the early assembly proteins of the 50S ribosomal subunit, although it is not seen to bind rRNA by itself. It is important during the early stages of 50S assembly. This is Large ribosomal subunit protein uL13 from Latilactobacillus sakei subsp. sakei (strain 23K) (Lactobacillus sakei subsp. sakei).